The primary structure comprises 283 residues: 2-dehydro-3-deoxyphosphooctonate aldolase (283 aa).

Belongs to the KdsA family.

Its subcellular location is the cytoplasm. It carries out the reaction D-arabinose 5-phosphate + phosphoenolpyruvate + H2O = 3-deoxy-alpha-D-manno-2-octulosonate-8-phosphate + phosphate. It functions in the pathway carbohydrate biosynthesis; 3-deoxy-D-manno-octulosonate biosynthesis; 3-deoxy-D-manno-octulosonate from D-ribulose 5-phosphate: step 2/3. The protein operates within bacterial outer membrane biogenesis; lipopolysaccharide biosynthesis. In Shewanella frigidimarina (strain NCIMB 400), this protein is 2-dehydro-3-deoxyphosphooctonate aldolase.